A 369-amino-acid polypeptide reads, in one-letter code: Maltose/maltodextrin import ATP-binding protein MalK (369 aa).

An ABC transporter domain is found at 4-234; that stretch reads VTLRNVCKAY…PQNRFVAGFI (231 aa). Residue 36–43 participates in ATP binding; that stretch reads GPSGCGKS.

Belongs to the ABC transporter superfamily. Maltooligosaccharide importer (TC 3.A.1.1.1) family. As to quaternary structure, the complex is composed of two ATP-binding proteins (MalK), two transmembrane proteins (MalG and MalK) and a solute-binding protein (MalE).

The protein localises to the cell inner membrane. It catalyses the reaction D-maltose(out) + ATP + H2O = D-maltose(in) + ADP + phosphate + H(+). Its function is as follows. Part of the ABC transporter complex MalEFGK involved in maltose/maltodextrin import. Responsible for energy coupling to the transport system. In Photobacterium profundum (strain SS9), this protein is Maltose/maltodextrin import ATP-binding protein MalK.